Consider the following 863-residue polypeptide: Valine--tRNA ligase (863 aa).

A 'HIGH' region motif is present at residues 43–53 (PYPTGSFHIGH). Positions 517–521 (KMSKS) match the 'KMSKS' region motif. Position 520 (Lys-520) interacts with ATP.

This sequence belongs to the class-I aminoacyl-tRNA synthetase family. ValS type 2 subfamily.

The protein resides in the cytoplasm. The catalysed reaction is tRNA(Val) + L-valine + ATP = L-valyl-tRNA(Val) + AMP + diphosphate. Functionally, catalyzes the attachment of valine to tRNA(Val). As ValRS can inadvertently accommodate and process structurally similar amino acids such as threonine, to avoid such errors, it has a 'posttransfer' editing activity that hydrolyzes mischarged Thr-tRNA(Val) in a tRNA-dependent manner. The chain is Valine--tRNA ligase from Archaeoglobus fulgidus (strain ATCC 49558 / DSM 4304 / JCM 9628 / NBRC 100126 / VC-16).